The following is a 90-amino-acid chain: Putative membrane protein insertion efficiency factor (90 aa).

Belongs to the UPF0161 family.

Its subcellular location is the cell membrane. Could be involved in insertion of integral membrane proteins into the membrane. The sequence is that of Putative membrane protein insertion efficiency factor from Lactococcus lactis subsp. cremoris (strain MG1363).